The primary structure comprises 237 residues: Oligoribonuclease, mitochondrial (237 aa).

Residues 1 to 25 (MLGVSLGARLLRGVGGRRGQFGARG) constitute a mitochondrion transit peptide. Residues 43–207 (MVWVDLEMTG…DDISESIKEL (165 aa)) form the Exonuclease domain. Aspartate 47 and glutamate 49 together coordinate Mg(2+). A Phosphoserine modification is found at serine 92. Position 122 is a phosphotyrosine (tyrosine 122). Aspartate 147 lines the Mg(2+) pocket. Residue lysine 173 is modified to N6-acetyllysine. Histidine 194 is an active-site residue. Aspartate 199 lines the Mg(2+) pocket.

Belongs to the oligoribonuclease family. As to quaternary structure, homodimer. Homotetramer. Mn(2+) serves as cofactor. It depends on Mg(2+) as a cofactor.

The protein localises to the mitochondrion intermembrane space. Its subcellular location is the mitochondrion matrix. It localises to the mitochondrion. It is found in the cytoplasm. The protein resides in the nucleus. In terms of biological role, 3'-to-5'exoribonuclease that preferentially degrades DNA and RNA oligonucleotides composed of only two nucleotides. Binds and degrades longer oligonucleotides with a lower affinity. Plays dual roles in mitochondria, scavenging nanoRNAs (small RNA oligonucleotides of &lt;5 nucleotides) that are produced by the degradosome and clearing short RNAs that are generated by RNA processing. Essential for correct initiation of mitochondrial transcription, degrading mitochondrial RNA dinucleotides to prevent RNA-primed transcription at non-canonical sites in the mitochondrial genome. Essential for embryonic development. This Mus musculus (Mouse) protein is Oligoribonuclease, mitochondrial (Rexo2).